We begin with the raw amino-acid sequence, 328 residues long: GMP reductase (328 aa).

Catalysis depends on cysteine 174, which acts as the Thioimidate intermediate. NADP(+) is bound at residue 203–226; it reads IIADGGIRTHGDIAKSIRFGASMV.

Belongs to the IMPDH/GMPR family. GuaC type 2 subfamily.

The enzyme catalyses IMP + NH4(+) + NADP(+) = GMP + NADPH + 2 H(+). In terms of biological role, catalyzes the irreversible NADPH-dependent deamination of GMP to IMP. It functions in the conversion of nucleobase, nucleoside and nucleotide derivatives of G to A nucleotides, and in maintaining the intracellular balance of A and G nucleotides. The protein is GMP reductase of Staphylococcus saprophyticus subsp. saprophyticus (strain ATCC 15305 / DSM 20229 / NCIMB 8711 / NCTC 7292 / S-41).